Consider the following 454-residue polypeptide: Guanine deaminase (454 aa).

Residues His82 and His84 each coordinate Zn(2+). Substrate is bound by residues 84 to 87 (HAPQ), 213 to 214 (RF), 240 to 243 (HISE), and Asp330. His240 and Asp330 together coordinate Zn(2+). Residue Ser453 is modified to Phosphoserine.

The protein belongs to the metallo-dependent hydrolases superfamily. ATZ/TRZ family. As to quaternary structure, homodimer. The cofactor is Zn(2+).

The enzyme catalyses guanine + H2O + H(+) = xanthine + NH4(+). Its pathway is purine metabolism; guanine degradation; xanthine from guanine: step 1/1. Catalyzes the hydrolytic deamination of guanine, producing xanthine and ammonia. This Mus musculus (Mouse) protein is Guanine deaminase.